The following is a 314-amino-acid chain: Dihydropteroate synthase (314 aa).

Residues 10–294 (TVICGIINVT…DVASHRMAVE (285 aa)) form the Pterin-binding domain. Position 17 (N17) interacts with Mg(2+). (7,8-dihydropterin-6-yl)methyl diphosphate is bound by residues T57, D91, N110, D201, K237, and 282 to 284 (RVH).

The protein belongs to the DHPS family. In terms of assembly, homodimer or homotrimer. Mg(2+) is required as a cofactor.

The catalysed reaction is (7,8-dihydropterin-6-yl)methyl diphosphate + 4-aminobenzoate = 7,8-dihydropteroate + diphosphate. It participates in cofactor biosynthesis; tetrahydrofolate biosynthesis; 7,8-dihydrofolate from 2-amino-4-hydroxy-6-hydroxymethyl-7,8-dihydropteridine diphosphate and 4-aminobenzoate: step 1/2. Functionally, catalyzes the condensation of para-aminobenzoate (pABA) with 6-hydroxymethyl-7,8-dihydropterin diphosphate (DHPt-PP) to form 7,8-dihydropteroate (H2Pte), the immediate precursor of folate derivatives. The polypeptide is Dihydropteroate synthase (sulA) (Streptococcus pneumoniae serotype 4 (strain ATCC BAA-334 / TIGR4)).